Here is an 87-residue protein sequence, read N- to C-terminus: Small ribosomal subunit protein bS16 (87 aa).

Belongs to the bacterial ribosomal protein bS16 family.

The chain is Small ribosomal subunit protein bS16 from Aster yellows witches'-broom phytoplasma (strain AYWB).